We begin with the raw amino-acid sequence, 121 residues long: Large ribosomal subunit protein bL20 (121 aa).

It belongs to the bacterial ribosomal protein bL20 family.

Functionally, binds directly to 23S ribosomal RNA and is necessary for the in vitro assembly process of the 50S ribosomal subunit. It is not involved in the protein synthesizing functions of that subunit. This chain is Large ribosomal subunit protein bL20, found in Orientia tsutsugamushi (strain Boryong) (Rickettsia tsutsugamushi).